The following is a 291-amino-acid chain: 4-hydroxy-tetrahydrodipicolinate synthase (291 aa).

T44 contributes to the pyruvate binding site. The Proton donor/acceptor role is filled by Y132. K160 (schiff-base intermediate with substrate) is an active-site residue. I202 serves as a coordination point for pyruvate.

This sequence belongs to the DapA family. As to quaternary structure, homotetramer; dimer of dimers.

The protein resides in the cytoplasm. The enzyme catalyses L-aspartate 4-semialdehyde + pyruvate = (2S,4S)-4-hydroxy-2,3,4,5-tetrahydrodipicolinate + H2O + H(+). It participates in amino-acid biosynthesis; L-lysine biosynthesis via DAP pathway; (S)-tetrahydrodipicolinate from L-aspartate: step 3/4. Catalyzes the condensation of (S)-aspartate-beta-semialdehyde [(S)-ASA] and pyruvate to 4-hydroxy-tetrahydrodipicolinate (HTPA). The protein is 4-hydroxy-tetrahydrodipicolinate synthase of Rhizorhabdus wittichii (strain DSM 6014 / CCUG 31198 / JCM 15750 / NBRC 105917 / EY 4224 / RW1) (Sphingomonas wittichii).